The chain runs to 374 residues: Secondary metabolism regulator laeA (374 aa).

The interval 1-75 is disordered; the sequence is MFEMGPVGTR…NRNGSPSMSP (75 aa). Positions 23–40 are enriched in polar residues; the sequence is SYHSPTSSDRGRSRQNSD. Met207 carries the post-translational modification S-methylmethionine.

This sequence belongs to the methyltransferase superfamily. LaeA methyltransferase family. As to quaternary structure, component of the heterotrimeric velvet complex composed of laeA, veA and velB; VeA acting as a bridging protein between laeA and velB. Self-methylates at Met-207.

It is found in the nucleus. It catalyses the reaction L-methionyl-[protein] + S-adenosyl-L-methionine = S-methyl-L-methionyl-[protein] + S-adenosyl-L-homocysteine. Its function is as follows. Methyltransferase that performs automethylation at Met-207. No other methyl-accepting substrate has been identified yet. Component of the velvet transcription factor complex that acts as a global regulator for secondary metabolite gene expression. Controls the expression of the sterigmatocystin, penicillin, and lovastatin gene clusters. Controls light-dependent formation of the velB-vosA complex, veA protein modification, and is required for light-mediated inhibition of sexual development. Within the velvet complex, controls light-dependent secondary metabolism. Involved in the defense response against Drosophila melanogaster larval grazing. The sequence is that of Secondary metabolism regulator laeA from Emericella nidulans (Aspergillus nidulans).